Here is a 2839-residue protein sequence, read N- to C-terminus: Neurofibromin (2839 aa).

A2 is subject to N-acetylalanine. A phosphoserine mark is found at S864 and S876. The Ras-GAP domain occupies 1251 to 1482 (HLLYQLLWNM…DAARRFFLDI (232 aa)). Residues 1580–1738 (EKEEFKALKT…ATLALEEDLK (159 aa)) form the CRAL-TRIO domain. The segment at 1580 to 1837 (EKEEFKALKT…RTRWELSQPD (258 aa)) is lipid binding. 2 positions are modified to phosphoserine: S2188 and S2467. Residue T2514 is modified to Phosphothreonine. 4 positions are modified to phosphoserine: S2515, S2521, S2523, and S2543. Residues 2555–2571 (KRQEMESGITTPPKMRR) carry the Bipartite nuclear localization signal motif. T2565 bears the Phosphothreonine mark. Phosphoserine is present on residues S2597, S2802, and S2817. Positions 2787–2839 (TSQHSPGIDKENVELSPTTGHCNSGRTRHGSASQVQKQRSAGSFKRNSIKKIV) are disordered. The span at 2801 to 2827 (LSPTTGHCNSGRTRHGSASQVQKQRSA) shows a compositional bias: polar residues.

Interacts with HTR6. Interacts with SPRED2. In terms of processing, ubiquitinated by RNF7/RBX2, leading to its degradation. As to expression, detected in brain, peripheral nerve, lung, colon and muscle.

The protein localises to the nucleus. It is found in the nucleolus. Its subcellular location is the cell membrane. Stimulates the GTPase activity of Ras. NF1 shows greater affinity for Ras GAP, but lower specific activity. May be a regulator of Ras activity. The sequence is that of Neurofibromin (NF1) from Homo sapiens (Human).